A 646-amino-acid polypeptide reads, in one-letter code: Cartilage acidic protein 1 (646 aa).

The N-terminal stretch at 1–28 (MAPSADPGMVRMALLLLPPLWLLPLTGG) is a signal peptide. One copy of the FG-GAP 1; atypical repeat lies at 47–89 (DYDSNPTQLNYGVAVTDVDHDGDFEIVVAGYTGPNLVLKYNRA). Residues 106–148 (YALRDRQGNAIGVTACDIDGDGREEIYFLNTNNAFSGVATYTD) form an FG-GAP 2; atypical repeat. The FG-GAP 3; atypical repeat unit spans residues 284-334 (AGVDDPHQHGRGVALADFNRDGKVDIVYGNWNGPHRLYLQMSAHGKVRFRD). An FG-GAP 4; atypical repeat occupies 396–438 (GDALEPEGRGTGGVVTDFDGDGMLDLILSHGESMAQPLSVFRG). An EGF-like domain is found at 560–606 (DTNECIQFPFVCPRDKPVCVNTYGSYRCRTNKRCNRGYEPNEDGTAC). Disulfide bonds link Cys-564-Cys-578, Cys-571-Cys-587, and Cys-593-Cys-606.

The protein resides in the secreted. Its subcellular location is the extracellular space. It is found in the extracellular matrix. This is Cartilage acidic protein 1 (Crtac1) from Mus musculus (Mouse).